Consider the following 149-residue polypeptide: Large ribosomal subunit protein bL9 (149 aa).

Belongs to the bacterial ribosomal protein bL9 family.

Binds to the 23S rRNA. This chain is Large ribosomal subunit protein bL9, found in Chromobacterium violaceum (strain ATCC 12472 / DSM 30191 / JCM 1249 / CCUG 213 / NBRC 12614 / NCIMB 9131 / NCTC 9757 / MK).